A 292-amino-acid polypeptide reads, in one-letter code: Ubiquinone biosynthesis protein UbiV (292 aa).

4 residues coordinate [4Fe-4S] cluster: cysteine 39, cysteine 180, cysteine 193, and cysteine 197.

This sequence belongs to the peptidase U32 family. UbiV subfamily. In terms of assembly, forms a heterodimer with UbiU. [4Fe-4S] cluster serves as cofactor.

The protein operates within cofactor biosynthesis; ubiquinone biosynthesis. Functionally, required for O(2)-independent ubiquinone (coenzyme Q) biosynthesis. Together with UbiU, is essential for the C6-hydroxylation reaction in the oxygen-independent ubiquinone biosynthesis pathway. This chain is Ubiquinone biosynthesis protein UbiV, found in Escherichia coli (strain K12).